Consider the following 525-residue polypeptide: Bifunctional purine biosynthesis protein PurH (525 aa).

In terms of domain architecture, MGS-like spans 1 to 149; it reads MSDPVIKRAL…KNNESVTVVT (149 aa).

It belongs to the PurH family.

The enzyme catalyses (6R)-10-formyltetrahydrofolate + 5-amino-1-(5-phospho-beta-D-ribosyl)imidazole-4-carboxamide = 5-formamido-1-(5-phospho-D-ribosyl)imidazole-4-carboxamide + (6S)-5,6,7,8-tetrahydrofolate. It carries out the reaction IMP + H2O = 5-formamido-1-(5-phospho-D-ribosyl)imidazole-4-carboxamide. Its pathway is purine metabolism; IMP biosynthesis via de novo pathway; 5-formamido-1-(5-phospho-D-ribosyl)imidazole-4-carboxamide from 5-amino-1-(5-phospho-D-ribosyl)imidazole-4-carboxamide (10-formyl THF route): step 1/1. It functions in the pathway purine metabolism; IMP biosynthesis via de novo pathway; IMP from 5-formamido-1-(5-phospho-D-ribosyl)imidazole-4-carboxamide: step 1/1. This chain is Bifunctional purine biosynthesis protein PurH, found in Prosthecochloris aestuarii (strain DSM 271 / SK 413).